A 434-amino-acid polypeptide reads, in one-letter code: Serine/threonine-protein kinase Sgk1-A (434 aa).

The disordered stretch occupies residues 66-94; the sequence is PQEPELLNENSSPPPSPSQQINLGPSSNP. A compositionally biased stretch (polar residues) spans 84-94; the sequence is QQINLGPSSNP. In terms of domain architecture, Protein kinase spans 101 to 358; the sequence is FQFLKIIGKG…FMEIKNHIFF (258 aa). Residues 107 to 115 and Lys130 each bind ATP; that span reads IGKGSFGKV. Asp225 serves as the catalytic Proton acceptor. An AGC-kinase C-terminal domain is found at 359–434; that stretch reads SPINWDDLIN…SYAPPMESYL (76 aa).

This sequence belongs to the protein kinase superfamily. AGC Ser/Thr protein kinase family.

The protein resides in the cytoplasm. It is found in the nucleus. The protein localises to the endoplasmic reticulum. It catalyses the reaction L-seryl-[protein] + ATP = O-phospho-L-seryl-[protein] + ADP + H(+). The catalysed reaction is L-threonyl-[protein] + ATP = O-phospho-L-threonyl-[protein] + ADP + H(+). Protein kinase that may play an important role in cellular stress response. Plays an important role in activating certain potassium, sodium, and chloride channels, suggesting an involvement in the regulation of processes such as cell survival, neuronal excitability, and renal sodium excretion. The polypeptide is Serine/threonine-protein kinase Sgk1-A (sgk1-a) (Xenopus laevis (African clawed frog)).